We begin with the raw amino-acid sequence, 706 residues long: Glycine--tRNA ligase beta subunit (706 aa).

Belongs to the class-II aminoacyl-tRNA synthetase family. In terms of assembly, tetramer of two alpha and two beta subunits.

The protein resides in the cytoplasm. It catalyses the reaction tRNA(Gly) + glycine + ATP = glycyl-tRNA(Gly) + AMP + diphosphate. This is Glycine--tRNA ligase beta subunit from Acidobacterium capsulatum (strain ATCC 51196 / DSM 11244 / BCRC 80197 / JCM 7670 / NBRC 15755 / NCIMB 13165 / 161).